The primary structure comprises 360 residues: Photosystem II protein D1 (360 aa).

Helical transmembrane passes span 29–46 (YIGW…AATA), 118–133 (HFLL…QWEL), and 142–156 (WICV…SATA). H118 provides a ligand contact to chlorophyll a. Position 126 (Y126) interacts with pheophytin a. Residues D170 and E189 each contribute to the [CaMn4O5] cluster site. A helical membrane pass occupies residues 197 to 218 (FHMLGVAGVFGGSLFSAMHGSL). H198 serves as a coordination point for chlorophyll a. Residues H215 and 264 to 265 (SF) each bind a quinone. H215 provides a ligand contact to Fe cation. Residue H272 participates in Fe cation binding. Residues 274 to 288 (FLAAWPVVGIWFTAL) traverse the membrane as a helical segment. The [CaMn4O5] cluster site is built by H332, E333, D342, and A344. A propeptide spanning residues 345-360 (AGEVAPVALTAPAING) is cleaved from the precursor.

Belongs to the reaction center PufL/M/PsbA/D family. In terms of assembly, PSII is composed of 1 copy each of membrane proteins PsbA, PsbB, PsbC, PsbD, PsbE, PsbF, PsbH, PsbI, PsbJ, PsbK, PsbL, PsbM, PsbT, PsbX, PsbY, PsbZ, Psb30/Ycf12, peripheral proteins PsbO, CyanoQ (PsbQ), PsbU, PsbV and a large number of cofactors. It forms dimeric complexes. The D1/D2 heterodimer binds P680, chlorophylls that are the primary electron donor of PSII, and subsequent electron acceptors. It shares a non-heme iron and each subunit binds pheophytin, quinone, additional chlorophylls, carotenoids and lipids. D1 provides most of the ligands for the Mn4-Ca-O5 cluster of the oxygen-evolving complex (OEC). There is also a Cl(-1) ion associated with D1 and D2, which is required for oxygen evolution. The PSII complex binds additional chlorophylls, carotenoids and specific lipids. serves as cofactor. Post-translationally, tyr-161 forms a radical intermediate that is referred to as redox-active TyrZ, YZ or Y-Z. In terms of processing, C-terminally processed by CtpA; processing is essential to allow assembly of the oxygen-evolving complex and thus photosynthetic growth.

The protein localises to the cellular thylakoid membrane. The catalysed reaction is 2 a plastoquinone + 4 hnu + 2 H2O = 2 a plastoquinol + O2. Functionally, photosystem II (PSII) is a light-driven water:plastoquinone oxidoreductase that uses light energy to abstract electrons from H(2)O, generating O(2) and a proton gradient subsequently used for ATP formation. It consists of a core antenna complex that captures photons, and an electron transfer chain that converts photonic excitation into a charge separation. The D1/D2 (PsbA/PsbD) reaction center heterodimer binds P680, the primary electron donor of PSII as well as several subsequent electron acceptors. In Microchaete diplosiphon (Fremyella diplosiphon), this protein is Photosystem II protein D1.